A 222-amino-acid chain; its full sequence is 7-cyano-7-deazaguanine synthase (222 aa).

7–17 (LSGGLDSSTVL) serves as a coordination point for ATP. 4 residues coordinate Zn(2+): C191, C199, C202, and C205.

Belongs to the QueC family. It depends on Zn(2+) as a cofactor.

It carries out the reaction 7-carboxy-7-deazaguanine + NH4(+) + ATP = 7-cyano-7-deazaguanine + ADP + phosphate + H2O + H(+). Its pathway is purine metabolism; 7-cyano-7-deazaguanine biosynthesis. Functionally, catalyzes the ATP-dependent conversion of 7-carboxy-7-deazaguanine (CDG) to 7-cyano-7-deazaguanine (preQ(0)). In Trichodesmium erythraeum (strain IMS101), this protein is 7-cyano-7-deazaguanine synthase.